The chain runs to 142 residues: Hemoglobin subunit alpha-4 (142 aa).

The Globin domain maps to 2 to 142 (TLTDSDKAAI…VATVLTSKYR (141 aa)). His59 lines the O2 pocket. His88 contributes to the heme b binding site.

This sequence belongs to the globin family. As to quaternary structure, heterotetramer of two alpha chains and two beta chains. In terms of tissue distribution, red blood cells.

In terms of biological role, this is a larval (tadpole) alpha-globin. The sequence is that of Hemoglobin subunit alpha-4 (hba4) from Xenopus laevis (African clawed frog).